Consider the following 525-residue polypeptide: GMP synthase [glutamine-hydrolyzing] (525 aa).

The Glutamine amidotransferase type-1 domain maps to 8–207; that stretch reads KILILDFGSQ…ALEICGCPAN (200 aa). The active-site Nucleophile is the Cys85. Residues His181 and Glu183 contribute to the active site. A GMPS ATP-PPase domain is found at 208–400; it reads WKPSSIIEDA…LGLPYDMLYR (193 aa). ATP is bound at residue 235–241; that stretch reads SGGVDSS.

As to quaternary structure, homodimer.

The catalysed reaction is XMP + L-glutamine + ATP + H2O = GMP + L-glutamate + AMP + diphosphate + 2 H(+). Its pathway is purine metabolism; GMP biosynthesis; GMP from XMP (L-Gln route): step 1/1. In terms of biological role, catalyzes the synthesis of GMP from XMP. In Shewanella pealeana (strain ATCC 700345 / ANG-SQ1), this protein is GMP synthase [glutamine-hydrolyzing].